Reading from the N-terminus, the 66-residue chain is Photosystem II reaction center protein J (66 aa).

Residues 1–25 (MSGKKSPYPDGRIPDRNPDGTPAVP) form a disordered region. The helical transmembrane segment at 37–57 (LWLVATAGGMAVLFVVGLFFY) threads the bilayer.

Belongs to the PsbJ family. PSII is composed of 1 copy each of membrane proteins PsbA, PsbB, PsbC, PsbD, PsbE, PsbF, PsbH, PsbI, PsbJ, PsbK, PsbL, PsbM, PsbT, PsbX, PsbY, PsbZ, Psb30/Ycf12, peripheral proteins PsbO, CyanoQ (PsbQ), PsbU, PsbV and a large number of cofactors. It forms dimeric complexes.

The protein resides in the cellular thylakoid membrane. One of the components of the core complex of photosystem II (PSII). PSII is a light-driven water:plastoquinone oxidoreductase that uses light energy to abstract electrons from H(2)O, generating O(2) and a proton gradient subsequently used for ATP formation. It consists of a core antenna complex that captures photons, and an electron transfer chain that converts photonic excitation into a charge separation. The sequence is that of Photosystem II reaction center protein J from Synechococcus sp. (strain CC9605).